The following is a 1251-amino-acid chain: Insulin receptor substrate 1 (1251 aa).

Residue Ser-3 is modified to Phosphoserine. The tract at residues 3–137 (SPPESDGFSD…GAGGGGGSCS (135 aa)) is mediates interaction with PHIP. Positions 12-115 (DVRKVGYLRK…WYQALLQLHN (104 aa)) constitute a PH domain. Position 99 is a phosphoserine; by CK2 (Ser-99). One can recognise an IRS-type PTB domain in the interval 160–264 (FKEVWQVILK…EAMRAMSDEF (105 aa)). A disordered region spans residues 262 to 430 (DEFRPRSKSQ…SDGGFISSDE (169 aa)). Over residues 269–281 (KSQSSSNCSNPIS) the composition is skewed to low complexity. Ser-270 carries the post-translational modification Phosphoserine. Phosphoserine; by RPS6KB1 is present on Ser-307. At Ser-312 the chain carries Phosphoserine; by IKKB, MAPK8 and RPS6KB1. Phosphoserine occurs at positions 323, 330, 345, and 348. Residues 354 to 363 (THAHRHRGSA) show a composition bias toward basic residues. Low complexity-rich tracts occupy residues 383-404 (SPSATSPVSLSSSSTSGHGSTS) and 412-424 (SSASVSGSPSDGG). The residue at position 419 (Ser-419) is a Phosphoserine. A phosphothreonine mark is found at Thr-446 and Thr-453. Tyr-465 is subject to Phosphotyrosine; by INSR. A YXXM motif 1 motif is present at residues 465–468 (YICM). A disordered region spans residues 494-513 (YTPGTGLGTSPALAGDEASS). Ser-527 carries the phosphoserine; by RPS6KB1 modification. The YXXM motif 2 motif lies at 551–554 (YTEM). Basic and acidic residues predominate over residues 594-610 (RRGGHHRPDSSTLHTDD). Residues 594–616 (RRGGHHRPDSSTLHTDDGYMPMS) form a disordered region. The residue at position 612 (Tyr-612) is a Phosphotyrosine; by INSR. Positions 612–615 (YMPM) match the YXXM motif 3 motif. Phosphoserine is present on Ser-629. A Phosphotyrosine; by INSR modification is found at Tyr-632. Residues 632–635 (YMPM) carry the YXXM motif 4 motif. Ser-636 carries the post-translational modification Phosphoserine; by RPS6KB1. Tyr-662 is modified (phosphotyrosine). The YXXM motif 5 signature appears at 662-665 (YMMM). The disordered stretch occupies residues 668–692 (SGGCSPDIGGGPSSSSSSTVPSGSS). The short motif at 730–733 (YMNM) is the YXXM motif 6 element. 2 disordered regions span residues 734 to 753 (SPVGDSNTSSPSDCYYGPED) and 769 to 946 (FKHT…EETG). Residues 774-783 (RPGEPEEGAR) are compositionally biased toward basic and acidic residues. A Phosphoserine; by AMPK and SIK2 modification is found at Ser-792. Low complexity-rich tracts occupy residues 799–813 (AATADDSSSSTSSDS) and 875–891 (QQQQQQQQQQQQQQQQQ). Ser-901 bears the Phosphoserine mark. Tyr-905 carries the post-translational modification Phosphotyrosine; by INSR. Residues 905 to 907 (YVN) form a GRB2-binding region. A compositionally biased stretch (polar residues) spans 924–937 (SRSSPSVRCPSQLQ). Phosphotyrosine; by INSR occurs at positions 950 and 998. 3 short sequence motifs (YXXM motif) span residues 950–953 (YMKM), 998–1001 (YMTM), and 1021–1024 (YADM). Disordered regions lie at residues 1091-1124 (NQSAKVIRADPQGCRRRHSSETFSSTPSATRVGN) and 1130-1149 (AGAAIGGSGGSSSSSEDVKR). Phosphoserine occurs at positions 1109 and 1110. Positions 1111 to 1123 (ETFSSTPSATRVG) are enriched in polar residues. Tyr-1188 is modified (phosphotyrosine; by INSR). Lys-1195 is covalently cross-linked (Glycyl lysine isopeptide (Lys-Gly) (interchain with G-Cter in ubiquitin)). The interval 1195–1251 (KDFKQRPQECTPQPQPPPPPPPHQPLGSSESSSTRRSSEDLSAYASISFQKQPEDLQ) is disordered. Pro residues predominate over residues 1207–1218 (QPQPPPPPPPHQ). Tyr-1238 is subject to Phosphotyrosine; by INSR.

Interacts with UBTF and PIK3CA. Interacts (via phosphorylated YXXM motifs) with PIK3R1. Interacts with ROCK1 and FER. Interacts (via PH domain) with PHIP. Interacts with GRB2. Interacts with SOCS7. Interacts (via IRS-type PTB domain) with IGF1R and INSR (via the tyrosine-phosphorylated NPXY motif). Interacts with ALK. Interacts with EIF2AK2/PKR. Interacts with GKAP1. Interacts with DGKZ in the absence of insulin; insulin stimulation decreases this interaction. Found in a ternary complex with DGKZ and PIP5K1A in the absence of insulin stimulation. Interacts with SQSTM1; the interaction is disrupted by the presence of tensin TNS2. Interacts with NCK1 (via SH2 domain). Interacts with NCK2 (via SH3 domain). Interacts with SH2B1; this interaction enhances leptin-induced activation of the PI3-kinase pathway. Interacts with DVL2; this interaction promotes the Wnt/beta-catenin signaling pathway. Interacts with JAK1. Post-translationally, serine phosphorylation of IRS1 is a mechanism for insulin resistance. Ser-312 phosphorylation inhibits insulin action through disruption of IRS1 interaction with the insulin receptor. Phosphorylation of Tyr-905 is required for GRB2-binding. Phosphorylated by ALK. Phosphorylated at Ser-270, Ser-307, Ser-636 and Ser-1109 by RPS6KB1; phosphorylation induces accelerated degradation of IRS1. Phosphorylated on tyrosine residues in response to insulin. In skeletal muscles, dephosphorylated on Tyr-612 by TNS2 under anabolic conditions; dephosphorylation results in the proteasomal degradation of IRS1. Ubiquitinated by the Cul7-RING(FBXW8) complex in a mTOR-dependent manner, leading to its degradation: the Cul7-RING(FBXW8) complex recognizes and binds IRS1 previously phosphorylated by S6 kinase (RPS6KB1 or RPS6KB2). Ubiquitinated by TRAF4 through 'Lys-29' linkage; this ubiquitination regulates the interaction of IRS1 with IGFR and IRS1 tyrosine phosphorylation upon IGF1 stimulation. In terms of processing, S-nitrosylation at by BLVRB inhibits its activity.

It is found in the cytoplasm. The protein localises to the nucleus. Its function is as follows. Signaling adapter protein that participates in the signal transduction from two prominent receptor tyrosine kinases, insulin receptor/INSR and insulin-like growth factor I receptor/IGF1R. Plays therefore an important role in development, growth, glucose homeostasis as well as lipid metabolism. Upon phosphorylation by the insulin receptor, functions as a signaling scaffold that propagates insulin action through binding to SH2 domain-containing proteins including the p85 regulatory subunit of PI3K, NCK1, NCK2, GRB2 or SHP2. Recruitment of GRB2 leads to the activation of the guanine nucleotide exchange factor SOS1 which in turn triggers the Ras/Raf/MEK/MAPK signaling cascade. Activation of the PI3K/AKT pathway is responsible for most of insulin metabolic effects in the cell, and the Ras/Raf/MEK/MAPK is involved in the regulation of gene expression and in cooperation with the PI3K pathway regulates cell growth and differentiation. Acts a positive regulator of the Wnt/beta-catenin signaling pathway through suppression of DVL2 autophagy-mediated degradation leading to cell proliferation. In Chlorocebus aethiops (Green monkey), this protein is Insulin receptor substrate 1 (IRS1).